The following is a 150-amino-acid chain: AN1-type zinc finger protein TMC1 (150 aa).

Residues 1-82 (MSDINEIEIP…TKKTTKKKKK (82 aa)) form a disordered region. At serine 2 the chain carries N-acetylserine. The span at 23-33 (DPMHEIEDKST) shows a compositional bias: basic and acidic residues. Phosphoserine occurs at positions 43 and 54. Residues 53–70 (NSRSSSNSSVTSTGQSSR) show a composition bias toward low complexity. Over residues 71–82 (RVTKKTTKKKKK) the composition is skewed to basic residues. The AN1-type zinc finger occupies 79–128 (KKKKNACYFDTCSSAASKFIGDCNFCKGHFCSKHRLMENHACNGLTSCKE). 8 residues coordinate Zn(2+): cysteine 85, cysteine 90, cysteine 101, cysteine 104, cysteine 109, histidine 112, histidine 118, and cysteine 120.

Its subcellular location is the nucleus. In terms of biological role, may have a role in protecting cells from metalloid-induced proteotoxicity. The polypeptide is AN1-type zinc finger protein TMC1 (Saccharomyces cerevisiae (strain ATCC 204508 / S288c) (Baker's yeast)).